The sequence spans 493 residues: Putative trans-acting regulator SP_1800 (493 aa).

Belongs to the AtxA/AcpA family.

The chain is Putative trans-acting regulator SP_1800 from Streptococcus pneumoniae serotype 4 (strain ATCC BAA-334 / TIGR4).